The chain runs to 459 residues: tRNA modification GTPase MnmE (459 aa).

(6S)-5-formyl-5,6,7,8-tetrahydrofolate-binding residues include R23, E85, and R124. In terms of domain architecture, TrmE-type G spans 221-380 (GLSTAIIGRP…LEKAIADTFF (160 aa)). N231 is a binding site for K(+). Residues 231-236 (NVGKSS), 250-256 (TEIPGTT), and 275-278 (DTAG) each bind GTP. S235 serves as a coordination point for Mg(2+). The K(+) site is built by T250, I252, and T255. Mg(2+) is bound at residue T256. K459 lines the (6S)-5-formyl-5,6,7,8-tetrahydrofolate pocket.

This sequence belongs to the TRAFAC class TrmE-Era-EngA-EngB-Septin-like GTPase superfamily. TrmE GTPase family. As to quaternary structure, homodimer. Heterotetramer of two MnmE and two MnmG subunits. The cofactor is K(+).

The protein localises to the cytoplasm. In terms of biological role, exhibits a very high intrinsic GTPase hydrolysis rate. Involved in the addition of a carboxymethylaminomethyl (cmnm) group at the wobble position (U34) of certain tRNAs, forming tRNA-cmnm(5)s(2)U34. The chain is tRNA modification GTPase MnmE from Oceanobacillus iheyensis (strain DSM 14371 / CIP 107618 / JCM 11309 / KCTC 3954 / HTE831).